The following is a 247-amino-acid chain: 2,3-bisphosphoglycerate-dependent phosphoglycerate mutase (247 aa).

Substrate is bound by residues 8–15 (RHGESQWN), 21–22 (TG), Arg-60, 87–90 (ERHY), Lys-98, 114–115 (RR), and 183–184 (GN). His-9 (tele-phosphohistidine intermediate) is an active-site residue. The active-site Proton donor/acceptor is Glu-87.

Belongs to the phosphoglycerate mutase family. BPG-dependent PGAM subfamily.

The catalysed reaction is (2R)-2-phosphoglycerate = (2R)-3-phosphoglycerate. It functions in the pathway carbohydrate degradation; glycolysis; pyruvate from D-glyceraldehyde 3-phosphate: step 3/5. Catalyzes the interconversion of 2-phosphoglycerate and 3-phosphoglycerate. The protein is 2,3-bisphosphoglycerate-dependent phosphoglycerate mutase of Chlorobium phaeovibrioides (strain DSM 265 / 1930) (Prosthecochloris vibrioformis (strain DSM 265)).